A 172-amino-acid chain; its full sequence is Peptide deformylase (172 aa).

Cysteine 91 and histidine 133 together coordinate Fe cation. The active site involves glutamate 134. Histidine 137 contacts Fe cation.

The protein belongs to the polypeptide deformylase family. The cofactor is Fe(2+).

The enzyme catalyses N-terminal N-formyl-L-methionyl-[peptide] + H2O = N-terminal L-methionyl-[peptide] + formate. Functionally, removes the formyl group from the N-terminal Met of newly synthesized proteins. Requires at least a dipeptide for an efficient rate of reaction. N-terminal L-methionine is a prerequisite for activity but the enzyme has broad specificity at other positions. The chain is Peptide deformylase from Vibrio campbellii (strain ATCC BAA-1116).